A 432-amino-acid chain; its full sequence is 3-phosphoshikimate 1-carboxyvinyltransferase (432 aa).

Positions 23, 24, and 28 each coordinate 3-phosphoshikimate. Phosphoenolpyruvate is bound at residue Lys-23. Gly-95 and Arg-123 together coordinate phosphoenolpyruvate. 3-phosphoshikimate contacts are provided by Ser-166, Gln-168, Asp-315, and Lys-342. Phosphoenolpyruvate is bound at residue Gln-168. The active-site Proton acceptor is Asp-315. 2 residues coordinate phosphoenolpyruvate: Arg-346 and Arg-390.

Belongs to the EPSP synthase family. In terms of assembly, monomer.

Its subcellular location is the cytoplasm. It catalyses the reaction 3-phosphoshikimate + phosphoenolpyruvate = 5-O-(1-carboxyvinyl)-3-phosphoshikimate + phosphate. Its pathway is metabolic intermediate biosynthesis; chorismate biosynthesis; chorismate from D-erythrose 4-phosphate and phosphoenolpyruvate: step 6/7. Functionally, catalyzes the transfer of the enolpyruvyl moiety of phosphoenolpyruvate (PEP) to the 5-hydroxyl of shikimate-3-phosphate (S3P) to produce enolpyruvyl shikimate-3-phosphate and inorganic phosphate. This is 3-phosphoshikimate 1-carboxyvinyltransferase from Lactiplantibacillus plantarum (strain ATCC BAA-793 / NCIMB 8826 / WCFS1) (Lactobacillus plantarum).